A 445-amino-acid chain; its full sequence is Phenylacetate-coenzyme A ligase (445 aa).

The protein belongs to the phenylacetyl-CoA ligase family. As to quaternary structure, monomer.

It carries out the reaction 2-phenylacetate + ATP + CoA = phenylacetyl-CoA + AMP + diphosphate. The protein operates within aromatic compound metabolism; phenylacetate degradation. In terms of biological role, catalyzes the activation of phenylacetic acid (PA) to phenylacetyl-CoA (PA-CoA). Involved in the phenylalanine metabolism. The chain is Phenylacetate-coenzyme A ligase from Thermus thermophilus (strain ATCC BAA-163 / DSM 7039 / HB27).